A 206-amino-acid polypeptide reads, in one-letter code: Dihydrofolate reductase (206 aa).

A DHFR domain is found at 6–204 (SLTLIVALTT…FDYEFEMWTR (199 aa)). NADP(+)-binding positions include alanine 12 and 18–24 (GIGRSNS). 32 to 37 (EISYFK) contributes to the substrate binding site. 59-61 (RKT) is an NADP(+) binding site. Arginine 75 contributes to the substrate binding site. NADP(+) contacts are provided by residues 81 to 83 (TRN) and 124 to 131 (GGAQLYKA).

The protein belongs to the dihydrofolate reductase family.

The enzyme catalyses (6S)-5,6,7,8-tetrahydrofolate + NADP(+) = 7,8-dihydrofolate + NADPH + H(+). The protein operates within cofactor biosynthesis; tetrahydrofolate biosynthesis; 5,6,7,8-tetrahydrofolate from 7,8-dihydrofolate: step 1/1. Key enzyme in folate metabolism. Catalyzes an essential reaction for de novo glycine and purine synthesis, and for DNA precursor synthesis. This is Dihydrofolate reductase from Pneumocystis carinii.